A 36-amino-acid chain; its full sequence is Conotoxin Cl14.10 (36 aa).

Residues 1 to 2 constitute a propeptide that is removed on maturation; the sequence is NE.

Contains 2 disulfide bond. Expressed by the venom duct.

Its subcellular location is the secreted. This chain is Conotoxin Cl14.10, found in Californiconus californicus (California cone).